Consider the following 464-residue polypeptide: Spore coat protein SP65 (464 aa).

A signal peptide spans 1 to 17; the sequence is MKVLLLLVCLVFAYVNA. In terms of domain architecture, Follistatin-like 1 spans 21–43; sequence ACYNVVCPSNYQCRAEGDQAYCV. Asn111 carries an N-linked (GlcNAc...) asparagine glycan. 2 consecutive Follistatin-like domains span residues 121-143 and 151-173; these read VCRDFQCPVGTHCFNGERGPHCV and LCRVTKCSYDFTCKMVRGNPTCL. The N-linked (GlcNAc...) asparagine glycan is linked to Asn247. The interval 250–320 is disordered; the sequence is STTGATTGAT…STTGAATTAP (71 aa).

In terms of assembly, binds to the C-terminal region of pspB.

The protein resides in the spore wall. Forms a triad with cellulose and pspB that is essential for spore outer layer formation. The chain is Spore coat protein SP65 (cotE) from Dictyostelium discoideum (Social amoeba).